Reading from the N-terminus, the 246-residue chain is Major prion protein (246 aa).

Positions 1-15 are cleaved as a signal peptide; it reads MLVLFVATWSDLGLC. The interaction with GRB2, ERI3 and SYN1 stretch occupies residues 16-223; the sequence is KKRPKPGGWN…ESQAYYQRGS (208 aa). Positions 18–102 are disordered; the sequence is RPKPGGWNTG…HKPSKPKTSM (85 aa). 5 repeat units span residues 44–52, 53–60, 61–68, 69–76, and 77–84. The segment at 44–84 is 5 X 8 AA tandem repeats of P-H-G-G-G-W-G-Q; it reads PQGGGGWGQPHGGGWGQPHGGGWGQPHGGGWGQPHGGGWGQ. Residues 45 to 88 show a composition bias toward gly residues; that stretch reads QGGGGWGQPHGGGWGQPHGGGWGQPHGGGWGQPHGGGWGQGGGT. Positions 54, 55, 56, 62, 63, 64, 70, 71, 72, 78, 79, and 80 each coordinate Cu(2+). The span at 91 to 102 shows a compositional bias: basic residues; sequence QWHKPSKPKTSM. Cysteines 172 and 207 form a disulfide. 2 N-linked (GlcNAc...) asparagine glycosylation sites follow: Asn174 and Asn190. Ser223 carries the GPI-anchor amidated serine lipid modification. A propeptide spans 224–246 (removed in mature form); that stretch reads SMVLFSSPPVILLISFLIFLIVG.

This sequence belongs to the prion family. Monomer and homodimer. Has a tendency to aggregate into amyloid fibrils containing a cross-beta spine, formed by a steric zipper of superposed beta-strands. Soluble oligomers may represent an intermediate stage on the path to fibril formation. Copper binding may promote oligomerization. Interacts with GRB2, APP, ERI3/PRNPIP and SYN1. Mislocalized cytosolically exposed PrP interacts with MGRN1; this interaction alters MGRN1 subcellular location and causes lysosomal enlargement. Interacts with KIAA1191.

The protein resides in the cell membrane. The protein localises to the golgi apparatus. Functionally, its primary physiological function is unclear. Has cytoprotective activity against internal or environmental stresses. May play a role in neuronal development and synaptic plasticity. May be required for neuronal myelin sheath maintenance. May play a role in iron uptake and iron homeostasis. Soluble oligomers are toxic to cultured neuroblastoma cells and induce apoptosis (in vitro). Association with GPC1 (via its heparan sulfate chains) targets PRNP to lipid rafts. Also provides Cu(2+) or Zn(2+) for the ascorbate-mediated GPC1 deaminase degradation of its heparan sulfate side chains. The sequence is that of Major prion protein (PRNP) from Cercocebus atys (Sooty mangabey).